Reading from the N-terminus, the 335-residue chain is Acetyl-coenzyme A carboxylase carboxyl transferase subunit alpha (335 aa).

The CoA carboxyltransferase C-terminal domain maps to glutamine 40–glutamate 294.

The protein belongs to the AccA family. Acetyl-CoA carboxylase is a heterohexamer composed of biotin carboxyl carrier protein (AccB), biotin carboxylase (AccC) and two subunits each of ACCase subunit alpha (AccA) and ACCase subunit beta (AccD).

It is found in the cytoplasm. It carries out the reaction N(6)-carboxybiotinyl-L-lysyl-[protein] + acetyl-CoA = N(6)-biotinyl-L-lysyl-[protein] + malonyl-CoA. The protein operates within lipid metabolism; malonyl-CoA biosynthesis; malonyl-CoA from acetyl-CoA: step 1/1. Component of the acetyl coenzyme A carboxylase (ACC) complex. First, biotin carboxylase catalyzes the carboxylation of biotin on its carrier protein (BCCP) and then the CO(2) group is transferred by the carboxyltransferase to acetyl-CoA to form malonyl-CoA. The sequence is that of Acetyl-coenzyme A carboxylase carboxyl transferase subunit alpha from Prochlorococcus marinus subsp. pastoris (strain CCMP1986 / NIES-2087 / MED4).